Consider the following 489-residue polypeptide: MRVLHVCSELYPILKTGGLADVTAALPPALAGFGVDSRVLVPGFPAFINAIKDKQLLINIPSRFGAEEINIFLAKISNTKIDIYVIDAPSLFARPGNPYADSSNQAYADNYLRFALLGWVAARISEGLDAKWKPEIVHSHDWHAGLVPAYIKASELASGKKAVKTVFTVHNLAYQGLFPMSVFAELDLPGIFLSMNGLEFYGQVSFMKAGLYFADKITTVSPTYAKEIQIYEQGCGLEGLLADRHNDLYGVLNGVDPQIWNPKKDSLIATNYSSTTVATGKAKCKLALQQMMGLAEKEDALLFGIVTRLTEQKGLNLLIEAIGEITSRGGQIVLLGSGDKALEEVFLAAAKKYSKSIAVQIGYDEEQAHRIIAGSDVIMVPSRFEPCGLTQLYGLTYGTLPLVHKVGGLADTVIDSSLENLADGTATGFVFDEFSVESLTLAIRRAFALYNRKTDWKKVRKTAMQQQVTWDSSAEKIYQIYKNLVRENN.

K15 is a binding site for ADP-alpha-D-glucose.

It belongs to the glycosyltransferase 1 family. Bacterial/plant glycogen synthase subfamily.

The catalysed reaction is [(1-&gt;4)-alpha-D-glucosyl](n) + ADP-alpha-D-glucose = [(1-&gt;4)-alpha-D-glucosyl](n+1) + ADP + H(+). It functions in the pathway glycan biosynthesis; glycogen biosynthesis. Synthesizes alpha-1,4-glucan chains using ADP-glucose. The polypeptide is Glycogen synthase (Francisella tularensis subsp. tularensis (strain SCHU S4 / Schu 4)).